We begin with the raw amino-acid sequence, 84 residues long: MKLLYLFLAILLAIEEPVISGKHHILRCMGNSGICRASCKKNEQPYLYCRNYQHCCLQSYMRISISGEEENTDWSYEKQWPRLP.

An N-terminal signal peptide occupies residues 1–21 (MKLLYLFLAILLAIEEPVISG). 3 cysteine pairs are disulfide-bonded: C28–C55, C35–C49, and C39–C56.

This sequence belongs to the beta-defensin family.

It is found in the secreted. In terms of biological role, has antibacterial activity. This Hylobates lar (Lar gibbon) protein is Beta-defensin 119 (DEFB119).